The primary structure comprises 894 residues: Protein translocase subunit SecA (894 aa).

Residues Gln-87, 105–109 (GEGKT), and Asp-512 contribute to the ATP site. The segment at 836–870 (EVEQAERERQAHAEQESSHYHAEGEGQDFSDLHIG) is disordered. Zn(2+)-binding residues include Cys-875, Cys-877, Cys-886, and His-887.

This sequence belongs to the SecA family. As to quaternary structure, monomer and homodimer. Part of the essential Sec protein translocation apparatus which comprises SecA, SecYEG and auxiliary proteins SecDF-YajC and YidC. Zn(2+) serves as cofactor.

It localises to the cell inner membrane. It is found in the cytoplasm. The enzyme catalyses ATP + H2O + cellular proteinSide 1 = ADP + phosphate + cellular proteinSide 2.. In terms of biological role, part of the Sec protein translocase complex. Interacts with the SecYEG preprotein conducting channel. Has a central role in coupling the hydrolysis of ATP to the transfer of proteins into and across the cell membrane, serving both as a receptor for the preprotein-SecB complex and as an ATP-driven molecular motor driving the stepwise translocation of polypeptide chains across the membrane. This Glaesserella parasuis serovar 5 (strain SH0165) (Haemophilus parasuis) protein is Protein translocase subunit SecA.